The following is a 325-amino-acid chain: Lipid droplet-associated hydrolase (325 aa).

Catalysis depends on Ser139, which acts as the Nucleophile. Residues Asp271 and His300 each act as charge relay system in the active site.

The protein belongs to the AB hydrolase superfamily. LDAH family.

It localises to the lipid droplet. It is found in the endoplasmic reticulum. The enzyme catalyses a cholesterol ester + H2O = cholesterol + a fatty acid + H(+). Functionally, probable serine lipid hydrolase associated with lipid droplets. Has low cholesterol esterase activity. Appears to lack triglyceride lipase activity. Involved in cholesterol and triglyceride homeostasis; stimulates cellular triglyceride accumulation and cellular cholesterol release. Acts antagonistically with PNPLA2/ATGL in regulation of cellular lipid stores. May regulate triglyceride accumulation indirectly through stimulation of PNPLA2/ATGL ubiquitination and proteasomal degradation. Promotes microtubule-dependent lipid droplet fusion. Highly expressed in macrophage-rich areas in atherosclerotic lesions, suggesting that it could promote cholesterol ester turnover in macrophages. In Pongo abelii (Sumatran orangutan), this protein is Lipid droplet-associated hydrolase.